The following is a 456-amino-acid chain: Phosphomethylpyrimidine synthase (456 aa).

Substrate is bound by residues N80, M109, Y139, H175, 195 to 197, 236 to 239, and E275; these read SRG and DSLR. H279 contacts Zn(2+). Y302 lines the substrate pocket. A Zn(2+)-binding site is contributed by H343. [4Fe-4S] cluster-binding residues include C423, C426, and C431.

It belongs to the ThiC family. [4Fe-4S] cluster serves as cofactor.

It catalyses the reaction 5-amino-1-(5-phospho-beta-D-ribosyl)imidazole + S-adenosyl-L-methionine = 4-amino-2-methyl-5-(phosphooxymethyl)pyrimidine + CO + 5'-deoxyadenosine + formate + L-methionine + 3 H(+). Its pathway is cofactor biosynthesis; thiamine diphosphate biosynthesis. Its function is as follows. Catalyzes the synthesis of the hydroxymethylpyrimidine phosphate (HMP-P) moiety of thiamine from aminoimidazole ribotide (AIR) in a radical S-adenosyl-L-methionine (SAM)-dependent reaction. This Synechococcus sp. (strain ATCC 27144 / PCC 6301 / SAUG 1402/1) (Anacystis nidulans) protein is Phosphomethylpyrimidine synthase.